Reading from the N-terminus, the 361-residue chain is POU domain, class 3, transcription factor 4-A (361 aa).

Disordered stretches follow at residues 100–131 (HVNH…GQPI), 150–189 (LTPP…EETP), and 333–361 (EKRM…CNEL). The segment covering 119-131 (AHNSSLTSSGQPI) has biased composition (polar residues). Residues 165–183 (VLREPNDHVDLGSHHCQDH) are compositionally biased toward basic and acidic residues. The POU-specific domain maps to 186-260 (EETPTSDELE…LLNKWLEEAD (75 aa)). A DNA-binding region (homeobox) is located at residues 278-337 (KRKKRTSIEVSVKGVLETHFLKCPKPAALEITSLADSLQLEKEVVRVWFCNRRQKEKRMT).

Belongs to the POU transcription factor family. Class-3 subfamily. From embryonic stage 10, expressed in the Spemann's organizer. During gastrulation, expressed in both the involuting mesoderm and the overlying neuroectoderm. During the neural plate and neural fold stages, expressed in the entire neuroectoderm with expression in discrete regions of the developing nervous system persisting at later stages. Transiently expressed in the pronephros from stages 24-32. In adults, expressed in the kidney and brain.

It is found in the nucleus. Functionally, transcriptional activator. Induces neural-specific gene expression to act as a key regulator of neural differentiation. This Xenopus laevis (African clawed frog) protein is POU domain, class 3, transcription factor 4-A (pou3f4-a).